The primary structure comprises 387 residues: Probable G-protein coupled receptor 173 (387 aa).

Residues 1-40 lie on the Extracellular side of the membrane; it reads MANGNASSDGPGNPLAAVVSTTGGVMGGAPSSAVSTYVKL. N-linked (GlcNAc...) asparagine glycosylation is present at Asn-5. The chain crosses the membrane as a helical span at residues 41–61; the sequence is VLLGLIICISLVGNLVVSLLV. Topologically, residues 62–87 are cytoplasmic; it reads LRDRALHKAPYYFLLDLCLADTIRSA. The chain crosses the membrane as a helical span at residues 88-108; it reads VCFPFVLVSIKNGSAWTYSVL. Topologically, residues 109–111 are extracellular; the sequence is SCK. The cysteines at positions 110 and 188 are disulfide-linked. Residues 112 to 132 traverse the membrane as a helical segment; it reads VVAFMAVLFCFHAAFMLFCIS. Topologically, residues 133-153 are cytoplasmic; sequence VTRYMAIAHHRFYSKRMTFWT. A helical transmembrane segment spans residues 154–174; the sequence is CVAVVCMVWTLSVAMAFPPVF. The Extracellular segment spans residues 175–202; it reads DVGTYKFIREEDQCIFEHRYFKANDTLG. A glycan (N-linked (GlcNAc...) asparagine) is linked at Asn-198. A helical transmembrane segment spans residues 203–223; the sequence is FMLMLAVLILATHVVYMKLLL. Over 224–301 the chain is Cytoplasmic; it reads FEYKHRKMKP…FKAEKQLGRM (78 aa). Residues 302–322 form a helical membrane-spanning segment; the sequence is FYVITLFFLVLWSPYIVACYW. Topologically, residues 323–335 are extracellular; it reads RVFVKACTIPHRY. The chain crosses the membrane as a helical span at residues 336–356; it reads LSTTVWMSFAQAGVNPIICFF. Over 357 to 387 the chain is Cytoplasmic; the sequence is LNKDLKKGLLAHLPPCCRTPPQLPREPYCVM.

It belongs to the G-protein coupled receptor 1 family.

It localises to the cell membrane. Its function is as follows. Is a receptor for the SMIM20 derived peptides Phoenixin-14 and Phoenixin-20. It mediates the Phoenixin-14 and Phoenixin-20 augmentation of gonadotropin-releasing hormone (GNRH) signaling in the hypothalamus and pituitary gland. In the ovary, it mediates the effects of Phoenixin-14 and Phoenixin-20 induced granulosa cell proliferation during follicular growth. The chain is Probable G-protein coupled receptor 173 (gpr173) from Danio rerio (Zebrafish).